A 421-amino-acid chain; its full sequence is Probable N-acetylgalactosaminyltransferase 8 (421 aa).

The Cytoplasmic portion of the chain corresponds to 1–3 (MRR). A helical; Signal-anchor for type II membrane protein transmembrane segment spans residues 4 to 24 (HVVLSIFVFAGIVFAAEEAEK). Residues 25-421 (LPKCEHVDPY…ELEPKVHDEL (397 aa)) lie on the Lumenal side of the membrane. Residues asparagine 52 and asparagine 58 are each glycosylated (N-linked (GlcNAc...) asparagine). 2 cysteine pairs are disulfide-bonded: cysteine 98/cysteine 331 and cysteine 322/cysteine 399. Residues 106 to 219 (SYSTSVVVIH…ERWLEPLLQP (114 aa)) form a catalytic subdomain A region. Substrate contacts are provided by aspartate 147 and arginine 180. A Mn(2+)-binding site is contributed by aspartate 203. Serine 204 contributes to the substrate binding site. Histidine 205 contacts Mn(2+). The tract at residues 277–339 (PFNSPAMPGG…PCSRVGHVFR (63 aa)) is catalytic subdomain B. Tryptophan 308 is a substrate binding site. Residue histidine 336 participates in Mn(2+) binding. 2 residues coordinate substrate: arginine 339 and tyrosine 344. The short motif at 418 to 421 (HDEL) is the Prevents secretion from ER element.

This sequence belongs to the glycosyltransferase 2 family. GalNAc-T subfamily. It depends on Mn(2+) as a cofactor.

It localises to the golgi apparatus membrane. The protein operates within protein modification; protein glycosylation. In terms of biological role, potential glycopeptide transferase involved in O-linked oligosaccharide biosynthesis. In contrast to other members of the family, it does not act as a peptide transferase that transfers GalNAc onto serine or threonine residue on peptides that have been tested. Some peptide transferase activity is however not excluded, considering that its appropriate peptide substrate may remain unidentified. The chain is Probable N-acetylgalactosaminyltransferase 8 (gly-8) from Caenorhabditis elegans.